The sequence spans 656 residues: Translation factor GUF1 homolog, mitochondrial (656 aa).

In terms of domain architecture, tr-type G spans 55 to 236; it reads QRIRNFSIIA…EIVRRLPPPD (182 aa). GTP-binding positions include 64 to 71, 129 to 133, and 183 to 186; these read AHVDHGKS, DTPGH, and NKID.

Belongs to the TRAFAC class translation factor GTPase superfamily. Classic translation factor GTPase family. LepA subfamily.

Its subcellular location is the mitochondrion inner membrane. It catalyses the reaction GTP + H2O = GDP + phosphate + H(+). Functionally, promotes mitochondrial protein synthesis. May act as a fidelity factor of the translation reaction, by catalyzing a one-codon backward translocation of tRNAs on improperly translocated ribosomes. Binds to mitochondrial ribosomes in a GTP-dependent manner. The chain is Translation factor GUF1 homolog, mitochondrial from Aedes aegypti (Yellowfever mosquito).